The chain runs to 365 residues: Sulfate/thiosulfate import ATP-binding protein CysA (365 aa).

One can recognise an ABC transporter domain in the interval 3–237 (IEIARIKKSF…PATRFVLEFM (235 aa)). An ATP-binding site is contributed by 35-42 (GPSGSGKT).

The protein belongs to the ABC transporter superfamily. Sulfate/tungstate importer (TC 3.A.1.6) family. The complex is composed of two ATP-binding proteins (CysA), two transmembrane proteins (CysT and CysW) and a solute-binding protein (CysP).

It localises to the cell inner membrane. The catalysed reaction is sulfate(out) + ATP + H2O = sulfate(in) + ADP + phosphate + H(+). It catalyses the reaction thiosulfate(out) + ATP + H2O = thiosulfate(in) + ADP + phosphate + H(+). Its function is as follows. Part of the ABC transporter complex CysAWTP involved in sulfate/thiosulfate import. Responsible for energy coupling to the transport system. This is Sulfate/thiosulfate import ATP-binding protein CysA from Salmonella typhimurium (strain LT2 / SGSC1412 / ATCC 700720).